Consider the following 631-residue polypeptide: MILKEQETLGFQSEVKQLLNLMIHSLYSNKEIFLRELISNASDAADKLRFLALAKPDLYEGNGELYVRIICNKEKRTITIIDNGIGMCRTEVIDNLGTIAKSGTKAFLETIDVKNSKNNQLIGQFGVGFYSAFIVAQKVIVRTRAAGASADEGVHWESTGEGDYIIAAINKPERGTEITLFLREGEDEFLDDWRIKNTIGKYSDHITLPIEIATNSENKNNNIITWEQINKAQALWTRNKVDVSDQEYKDFYKHLYHDSNDPISWSHNRVEGQQEYTSLLYIPASASWGIWNRDHKYGLKLYIKRVLIMDHADYFLPNYLRFVKGIIDCNDLPLNISREMLQHNRITQNLKNAITKRILSMLEKLATQNNEQYQNFWQHFGLVIKEGLAEDPNNSKSIARLLRFSTTHSKSMEQNVSLDEYVSRIAEQQEKIYYIIADSYAAANSSPHLELLQKKGIEVLLLHERIDAWMMNYLIEFNGKSFQLVSKADLKLDKFLNENTTEQKDMTKAFEPFIERVKKYLGDRIKEVRLTYSLTDTPAIVTIDSNNMTTHMAKLIVASGQNKPDIKYIFELNPLHPIVKKVSNTDNDIYFSEVIELLLDQALLVECGTLENPNQFVRRINKLLNHDTIVN.

Residues 1-338 form an a; substrate-binding region; that stretch reads MILKEQETLG…CNDLPLNISR (338 aa). Positions 339-554 are b; that stretch reads EMLQHNRITQ…SNNMTTHMAK (216 aa). Residues 555–631 are c; sequence LIVASGQNKP…KLLNHDTIVN (77 aa).

It belongs to the heat shock protein 90 family. In terms of assembly, homodimer.

The protein localises to the cytoplasm. Its function is as follows. Molecular chaperone. Has ATPase activity. The polypeptide is Chaperone protein HtpG (Baumannia cicadellinicola subsp. Homalodisca coagulata).